The following is a 270-amino-acid chain: MSNLQTRIITAIVLGTITLWLTWVGGVGFTLFSIAIGLAMFYEWTELSATRQTAFSRLFGWAWLIVTGILLILDRGALLTIGFLVAGCAILLVTQWKSGRGWPAAGLFYAGFSALSLSLLRGDEPFGFTTIVFLFAVVWSTDIAAYFNGRALGGPKLAPRFSPNKTWSGAIGGAAAAVTGGLLVASLVAAPGGWGVPVLALLLSIVSQIGDLAESWVKRQFGAKDSGRLLPGHGGVLDRVDGLVAAAALLYLFGAIFAEPDVPSAIFFSF.

A run of 7 helical transmembrane segments spans residues 19–39 (LWLT…IGLA), 53–73 (TAFS…LLIL), 76–96 (GALL…VTQW), 101–121 (GWPA…SLLR), 126–146 (FGFT…IAAY), 183–203 (LVAS…ALLL), and 248–268 (ALLY…AIFF).

The protein belongs to the CDS family.

It localises to the cell inner membrane. The catalysed reaction is a 1,2-diacyl-sn-glycero-3-phosphate + CTP + H(+) = a CDP-1,2-diacyl-sn-glycerol + diphosphate. It functions in the pathway phospholipid metabolism; CDP-diacylglycerol biosynthesis; CDP-diacylglycerol from sn-glycerol 3-phosphate: step 3/3. The polypeptide is Phosphatidate cytidylyltransferase (cdsA) (Brucella melitensis biotype 1 (strain ATCC 23456 / CCUG 17765 / NCTC 10094 / 16M)).